We begin with the raw amino-acid sequence, 243 residues long: Alanyl-tRNA editing protein AlaX-M (243 aa).

Zn(2+)-binding residues include His105, His109, Cys208, and His212.

It belongs to the class-II aminoacyl-tRNA synthetase family. Editing domain AlaX-M subfamily. The cofactor is Zn(2+).

It localises to the cytoplasm. In terms of biological role, functions in trans to edit the amino acid moiety from incorrectly charged Ser-tRNA(Ala) or Gly-tRNA(Ala). Has no activity on incorrectly charged Ser-tRNA(Thr), nor on correctly charged Ala-tRNA(Ala) or Ser-tRNA(Ser). The protein is Alanyl-tRNA editing protein AlaX-M (alaXM) of Methanosarcina barkeri (strain Fusaro / DSM 804).